Here is a 406-residue protein sequence, read N- to C-terminus: Glycosyltransferase GlyE (406 aa).

The GT8 domain stretch occupies residues 3–265 (NTKRAVVFAG…SVILNEWFSK (263 aa)). UDP is bound by residues 11–16 (AGDYAY) and 106–107 (DS). 3 residues coordinate Mn(2+): D106, D108, and H227. 227 to 233 (HYISQDK) contributes to the UDP binding site.

In the N-terminal section; belongs to the glycosyltransferase 8 family. It depends on Mn(2+) as a cofactor.

The protein operates within protein modification; protein glycosylation. Its function is as follows. Involved in the polymorphic O-glycosylation of the serine-rich repeat protein PsrP. Catalyzes the third step in glycosylation of PsrP in this bacteria. Transfers galactose from UDP-galactose to the terminal glucose moiety of already-glycosylated PsrP (using the short substrate PsrP-GlcNAc-Glc). Has a very marked preference for PsrP substrate that has already been modified by GlcNAc and glucose. Has hydrolytic activity against UDP-galactose but none against UDP-glucose. Functionally, also catalyzes the fourth step in glycosylation of PsrP in this bacteria. Can transfer the sugar from UDP-galactose to the terminal sugar moiety of PsrP-GlcNAc-Glc-Glc and of PsrP-GlcNAc-Glc-Gal. The sequence is that of Glycosyltransferase GlyE from Streptococcus pneumoniae serotype 4 (strain ATCC BAA-334 / TIGR4).